A 76-amino-acid polypeptide reads, in one-letter code: Translational regulator CsrA (76 aa).

Belongs to the CsrA/RsmA family. As to quaternary structure, homodimer; the beta-strands of each monomer intercalate to form a hydrophobic core, while the alpha-helices form wings that extend away from the core.

It localises to the cytoplasm. In terms of biological role, a translational regulator that binds mRNA to regulate translation initiation and/or mRNA stability. Usually binds in the 5'-UTR at or near the Shine-Dalgarno sequence preventing ribosome-binding, thus repressing translation. Its main target seems to be the major flagellin gene, while its function is anatagonized by FliW. This is Translational regulator CsrA from Pseudothermotoga lettingae (strain ATCC BAA-301 / DSM 14385 / NBRC 107922 / TMO) (Thermotoga lettingae).